The primary structure comprises 107 residues: Small leucine-rich protein 1 (107 aa).

2 consecutive transmembrane segments (helical) span residues 19 to 39 (AALV…LAMS) and 53 to 73 (FLFF…IAYF). Positions 85-107 (SQNCDRQHNPKDGSSLYQRMKWT) are disordered.

It localises to the membrane. In Homo sapiens (Human), this protein is Small leucine-rich protein 1 (SMLR1).